The sequence spans 396 residues: S-adenosylmethionine synthase (396 aa).

Residue E11 participates in Mg(2+) binding. H17 lines the ATP pocket. K(+) is bound at residue E45. Residues E58 and Q101 each contribute to the L-methionine site. Residues 169–171 (DGK), 237–240 (SGRF), D248, 254–255 (RK), A271, K275, and K279 each bind ATP. D248 contributes to the L-methionine binding site. Position 279 (K279) interacts with L-methionine.

The protein belongs to the AdoMet synthase family. Homotetramer. It depends on Mn(2+) as a cofactor. The cofactor is Mg(2+). Co(2+) serves as cofactor. K(+) is required as a cofactor.

The protein localises to the cytoplasm. It carries out the reaction L-methionine + ATP + H2O = S-adenosyl-L-methionine + phosphate + diphosphate. It participates in amino-acid biosynthesis; S-adenosyl-L-methionine biosynthesis; S-adenosyl-L-methionine from L-methionine: step 1/1. In terms of biological role, catalyzes the formation of S-adenosylmethionine from methionine and ATP. The reaction comprises two steps that are both catalyzed by the same enzyme: formation of S-adenosylmethionine (AdoMet) and triphosphate, and subsequent hydrolysis of the triphosphate. This is S-adenosylmethionine synthase (SAMS) from Medicago sativa subsp. falcata (Sickle medic).